The following is a 244-amino-acid chain: Ribosomal RNA small subunit methyltransferase NEP1 (244 aa).

The disordered stretch occupies residues 1-33; sequence MSAASGGFQPRERRFSVQEQDWETTPPKKLRLG. Residues serine 5 and serine 16 each carry the phosphoserine modification. Residues threonine 176, glycine 201, glycine 206, and 219–224 each bind S-adenosyl-L-methionine; that span reads ISNYPL.

The protein belongs to the class IV-like SAM-binding methyltransferase superfamily. RNA methyltransferase NEP1 family. As to quaternary structure, homodimer. Part of the small subunit (SSU) processome, composed of more than 70 proteins and the RNA chaperone small nucleolar RNA (snoRNA) U3.

The protein resides in the nucleus. It localises to the nucleolus. The catalysed reaction is pseudouridine(1248) in human 18S rRNA + S-adenosyl-L-methionine = N(1)-methylpseudouridine(1248) in human 18S rRNA + S-adenosyl-L-homocysteine + H(+). In terms of biological role, S-adenosyl-L-methionine-dependent pseudouridine N(1)-methyltransferase that methylates pseudouridine at position in 18S rRNA. Involved the biosynthesis of the hypermodified N1-methyl-N3-(3-amino-3-carboxypropyl) pseudouridine (m1acp3-Psi) conserved in eukaryotic 18S rRNA. Is not able to methylate uridine at this position. Also has an essential role in 40S ribosomal subunit biogenesis independent on its methyltransferase activity, facilitating the incorporation of ribosomal protein S19 during the formation of pre-ribosomes. Part of the small subunit (SSU) processome, first precursor of the small eukaryotic ribosomal subunit. During the assembly of the SSU processome in the nucleolus, many ribosome biogenesis factors, an RNA chaperone and ribosomal proteins associate with the nascent pre-rRNA and work in concert to generate RNA folding, modifications, rearrangements and cleavage as well as targeted degradation of pre-ribosomal RNA by the RNA exosome. The protein is Ribosomal RNA small subunit methyltransferase NEP1 of Mus musculus (Mouse).